Reading from the N-terminus, the 1040-residue chain is Chromatin modification-related protein rik1 (1040 aa).

It belongs to the DDB1 family. As to quaternary structure, component of the Clr4 methyltransferase complex (ClrC) composed of at least clr4, rik1, pcu4, rbx1, raf1 and raf2. The cullin pcu4, rik1, raf1, raf2 and the ring-box protein rbx1 are components of an E3 ubiquitin ligase, whose activity is essential for heterochromatin assembly.

It is found in the nucleus. The protein resides in the cytoplasm. The protein localises to the cytoskeleton. It localises to the microtubule organizing center. Its subcellular location is the spindle pole body. It is found in the chromosome. Its function is as follows. Component of the Clr4 methyltransferase complex (ClrC) which contributes to the establishment of heterochromatin by specifically methylating histone H3 to form H3K9me. ClrC preferentially ubiquitylates H3K14 and ClrC-mediated H3 ubiquitination promotes clr4 methyltransferase activity for the methylation of H3K9. H3K9me represents a specific tag for epigenetic transcriptional repression by recruiting swi6/HP1 to methylated histones which leads to transcriptional silencing within centromeric heterochromatin, telomeric regions and at the silent mating-type loci. Rik1 is involved in the RNAi-mediated targeting of ClrC to heterochromatic repeat elements. Rik1 also has a function in meiotic telomere clustering. The sequence is that of Chromatin modification-related protein rik1 (rik1) from Schizosaccharomyces pombe (strain 972 / ATCC 24843) (Fission yeast).